Consider the following 179-residue polypeptide: Large ribosomal subunit protein uL5 (179 aa).

This sequence belongs to the universal ribosomal protein uL5 family. In terms of assembly, part of the 50S ribosomal subunit; part of the 5S rRNA/L5/L18/L25 subcomplex. Contacts the 5S rRNA and the P site tRNA. Forms a bridge to the 30S subunit in the 70S ribosome.

In terms of biological role, this is one of the proteins that bind and probably mediate the attachment of the 5S RNA into the large ribosomal subunit, where it forms part of the central protuberance. In the 70S ribosome it contacts protein S13 of the 30S subunit (bridge B1b), connecting the 2 subunits; this bridge is implicated in subunit movement. Contacts the P site tRNA; the 5S rRNA and some of its associated proteins might help stabilize positioning of ribosome-bound tRNAs. The chain is Large ribosomal subunit protein uL5 from Shewanella denitrificans (strain OS217 / ATCC BAA-1090 / DSM 15013).